Here is a 273-residue protein sequence, read N- to C-terminus: NH(3)-dependent NAD(+) synthetase (273 aa).

47 to 54 serves as a coordination point for ATP; sequence GISGGQDS. D53 serves as a coordination point for Mg(2+). R139 serves as a coordination point for deamido-NAD(+). T159 contacts ATP. E164 contributes to the Mg(2+) binding site. Deamido-NAD(+) contacts are provided by K172 and D179. ATP-binding residues include K188 and T210. 259–260 lines the deamido-NAD(+) pocket; it reads HK.

It belongs to the NAD synthetase family. In terms of assembly, homodimer.

It catalyses the reaction deamido-NAD(+) + NH4(+) + ATP = AMP + diphosphate + NAD(+) + H(+). It participates in cofactor biosynthesis; NAD(+) biosynthesis; NAD(+) from deamido-NAD(+) (ammonia route): step 1/1. Catalyzes the ATP-dependent amidation of deamido-NAD to form NAD. Uses ammonia as a nitrogen source. The sequence is that of NH(3)-dependent NAD(+) synthetase from Staphylococcus aureus (strain MRSA252).